Consider the following 1208-residue polypeptide: Calmodulin-binding transcription activator 2 (1208 aa).

Positions Arg30–Cys160 form a DNA-binding region, CG-1. Positions Asn78–Lys86 match the Nuclear localization signal motif. 3 disordered regions span residues Ile269–Gly328, Val366–Ala418, and Gln437–Pro507. Residues Pro275–Leu288 are compositionally biased toward pro residues. Low complexity-rich tracts occupy residues Ser294–Ser305 and Thr319–Gly328. 2 stretches are compositionally biased toward pro residues: residues Ser371 to Ala380 and Thr464 to Pro476. The IPT/TIG domain maps to Asp544–Arg622. ANK repeat units follow at residues Arg717–Leu750, Phe762–Ile792, and Leu796–Val826. 2 disordered regions span residues Val826–Ile881 and Asn908–Pro936. A compositionally biased stretch (low complexity) spans Pro829–Ser853. IQ domains lie at Leu1054–Val1083 and Met1107–Leu1136. A disordered region spans residues Tyr1144–Phe1166.

Belongs to the CAMTA family. May interact with calmodulin.

The protein resides in the nucleus. Transcription activator. May act as tumor suppressor. The chain is Calmodulin-binding transcription activator 2 (Camta2) from Mus musculus (Mouse).